A 147-amino-acid polypeptide reads, in one-letter code: 3-dehydroquinate dehydratase (147 aa).

Residue tyrosine 22 is the Proton acceptor of the active site. Positions 74, 80, and 87 each coordinate substrate. Catalysis depends on histidine 101, which acts as the Proton donor. Substrate-binding positions include 102 to 103 (IS) and arginine 112.

This sequence belongs to the type-II 3-dehydroquinase family. In terms of assembly, homododecamer.

The enzyme catalyses 3-dehydroquinate = 3-dehydroshikimate + H2O. It participates in metabolic intermediate biosynthesis; chorismate biosynthesis; chorismate from D-erythrose 4-phosphate and phosphoenolpyruvate: step 3/7. Functionally, catalyzes a trans-dehydration via an enolate intermediate. The polypeptide is 3-dehydroquinate dehydratase (Lachnospira eligens (strain ATCC 27750 / DSM 3376 / VPI C15-48 / C15-B4) (Eubacterium eligens)).